Reading from the N-terminus, the 331-residue chain is UPF0194 membrane protein YbhG (331 aa).

The N-terminal stretch at 1-19 (MKKPVVIGLAIAAIVTVIA) is a signal peptide. Positions 107-208 (EEIAQAAAAV…LDLQDTTLIA (102 aa)) form a coiled coil.

The protein belongs to the UPF0194 family.

It is found in the periplasm. The polypeptide is UPF0194 membrane protein YbhG (Salmonella arizonae (strain ATCC BAA-731 / CDC346-86 / RSK2980)).